The primary structure comprises 237 residues: Transcriptional regulatory protein YvrH (237 aa).

In terms of domain architecture, Response regulatory spans 5–119; the sequence is SILIVDDEKA…ELAARIRAHL (115 aa). Asp-55 bears the 4-aspartylphosphate mark. Positions 131–230 form a DNA-binding region, ompR/PhoB-type; the sequence is NQTYTYDYFT…VRGLGYRFIP (100 aa).

Post-translationally, phosphorylated by YvrG.

The protein localises to the cytoplasm. In terms of biological role, member of the two-component regulatory system YvrG/YvrH that positively regulates 7 transcriptional units (wprA, wapA-yxxG, dltABCDE, sunA, sunT-bdbA-yolJ-bdbB, sigO-rsoA, and sigX-rsiX), and negatively regulates the lytABC operon. In Bacillus subtilis (strain 168), this protein is Transcriptional regulatory protein YvrH (yvrH).